The primary structure comprises 533 residues: MKLLAVRRLLRIQRVVIRYRLDDLILELPMLPWWLRLLGATLPWRWLPRRKLELTRGARLRLALQDLGPIFIKFGQILSTRRDLLPDDIANELAWLQDKVPPFPPELAVKRIEEQLGAKIEQVFARFEREPLASASVAQVHAARLKSGEEVVVKVIRPNLEPVIRSDIAWLFILARLAERVSSEARRLHPVEVVSDYEKTIVDELDLLREAANASQLRRNFEGSPLLYVPQVYWDWCRPKVLVMERIYGIPVTDLETLRDQRTDFKALAERGVEIFFTQVFRDSFFHADMHPGNIFVSTRAPWSPQYIAVDCGIVGSLTDEDQDYLARNLIAFFKRDYRKVAQLHIDSGWVPAETKVNDFEAAIRTVCEPIFEKPLKDISFGQVLLRLFQTARRFNMEIQPQLVLLQKTLLNIEGLGRQLYPELDLWATAQPFLERWMRERVSPKQLLRNFQQQVEQVPHLSQMARDTLERLSQPHAHNTPPPEWKGSRHDWLGRLVGAVLLVGAAEVGLGQQLEAWPAWVMLAGGVFLILRR.

Residues 24–44 (LILELPMLPWWLRLLGATLPW) form a helical membrane-spanning segment. One can recognise a Protein kinase domain in the interval 126 to 494 (RFEREPLASA…WKGSRHDWLG (369 aa)). ATP-binding positions include 132–140 (LASASVAQV) and Lys-154. Asp-289 functions as the Proton acceptor in the catalytic mechanism. The helical transmembrane segment at 510–530 (LGQQLEAWPAWVMLAGGVFLI) threads the bilayer.

It belongs to the ABC1 family. UbiB subfamily.

It is found in the cell inner membrane. The protein operates within cofactor biosynthesis; ubiquinone biosynthesis [regulation]. Its function is as follows. Is probably a protein kinase regulator of UbiI activity which is involved in aerobic coenzyme Q (ubiquinone) biosynthesis. This Pseudomonas aeruginosa (strain LESB58) protein is Probable protein kinase UbiB.